We begin with the raw amino-acid sequence, 254 residues long: Fluoride-specific ion channel FluC 1 (254 aa).

3 consecutive transmembrane segments (helical) span residues Leu19–Tyr39, Ile51–Val71, and Ala80–Leu100. Positions 58 and 61 each coordinate Na(+).

The protein belongs to the fluoride channel Fluc/FEX (TC 1.A.43) family.

It localises to the cell inner membrane. The enzyme catalyses fluoride(in) = fluoride(out). Its activity is regulated as follows. Na(+) is not transported, but it plays an essential structural role and its presence is essential for fluoride channel function. Fluoride-specific ion channel. Important for reducing fluoride concentration in the cell, thus reducing its toxicity. The polypeptide is Fluoride-specific ion channel FluC 1 (Brucella suis biovar 1 (strain 1330)).